A 502-amino-acid polypeptide reads, in one-letter code: MEFSVKSGSPEKQRSACIVVGVYEPRRLSGIAEQLDKISEGYISNLLRRGDLEGKPGQMLLLHHVPNVLSERVLLVGCGKERELDERQYKQIITKTISTLNETGSMEAVCFLTELHVKGRDTYWKVRQAIESTQNSLYSFDALKTRKGETRRPLRKMVFNVPTRRELTIGERAIEHGTAVSAGMHLCRDVANMPPNICNPAYLASQARQMAEVYENLNVTTIGEEQMAKLGMNSYLAVGRASANESIMTVMEYQGAVDSTEKPIVLVGKGLTFDSGGISLKPGEAMDEMKYDMGGAAGVIGTMKALCEMKLPINVIGILAGCENMPAGNAYRPGDILTTMSGQTVEVLNTDAEGRLVLCDVLTYVERFDPELVIDTATLTGACVIALGKHASGLFSSHNPLAHEMLNAGEQSGDRAWRMPLWDEYQDMLDSPFADMTNLGGRPAGSITAACFLSRFTKKYNWAHLDVAGTAWNSGANKGSTGRPVPILSQFLINRAGVEISE.

The Mn(2+) site is built by Lys269 and Asp274. Lys281 is an active-site residue. Mn(2+) contacts are provided by Asp292, Asp351, and Glu353. Arg355 is a catalytic residue.

It belongs to the peptidase M17 family. Requires Mn(2+) as cofactor.

It is found in the cytoplasm. It catalyses the reaction Release of an N-terminal amino acid, Xaa-|-Yaa-, in which Xaa is preferably Leu, but may be other amino acids including Pro although not Arg or Lys, and Yaa may be Pro. Amino acid amides and methyl esters are also readily hydrolyzed, but rates on arylamides are exceedingly low.. It carries out the reaction Release of an N-terminal amino acid, preferentially leucine, but not glutamic or aspartic acids.. In terms of biological role, presumably involved in the processing and regular turnover of intracellular proteins. Catalyzes the removal of unsubstituted N-terminal amino acids from various peptides. In Shewanella frigidimarina (strain NCIMB 400), this protein is Probable cytosol aminopeptidase.